We begin with the raw amino-acid sequence, 408 residues long: GTPase Obg (408 aa).

Residues 1-159 (MKFFDEARIE…RNLHLELKVL (159 aa)) form the Obg domain. In terms of domain architecture, OBG-type G spans 160 to 334 (ADVGLLGMPN…LIFALQDFLD (175 aa)). GTP contacts are provided by residues 166–173 (GMPNAGKS), 191–195 (FTTLQ), 213–216 (DIPG), 284–287 (NKLD), and 315–317 (SAL). Residues serine 173 and threonine 193 each contribute to the Mg(2+) site. A disordered region spans residues 385-408 (AEDALAEDALDDDADGEDADPNAR).

Belongs to the TRAFAC class OBG-HflX-like GTPase superfamily. OBG GTPase family. In terms of assembly, monomer. The cofactor is Mg(2+).

It is found in the cytoplasm. Its function is as follows. An essential GTPase which binds GTP, GDP and possibly (p)ppGpp with moderate affinity, with high nucleotide exchange rates and a fairly low GTP hydrolysis rate. Plays a role in control of the cell cycle, stress response, ribosome biogenesis and in those bacteria that undergo differentiation, in morphogenesis control. This chain is GTPase Obg, found in Azoarcus sp. (strain BH72).